Here is a 75-residue protein sequence, read N- to C-terminus: CDC42 small effector protein 2-C (75 aa).

Residues Cys-10 and Cys-11 are each lipidated (S-palmitoyl cysteine). The 14-residue stretch at 29–42 folds into the CRIB domain; the sequence is IGEPMNFVHTAHVG.

Belongs to the CDC42SE/SPEC family.

It is found in the cytoplasm. The protein localises to the cytoskeleton. Its subcellular location is the cell membrane. Its function is as follows. Probably involved in the organization of the actin cytoskeleton by acting downstream of CDC42, inducing actin filament assembly. The polypeptide is CDC42 small effector protein 2-C (cdc42se2-c) (Xenopus laevis (African clawed frog)).